The sequence spans 802 residues: Penicillin G acylase (802 aa).

Positions 1–26 are cleaved as a signal peptide; the sequence is MKMKWLISVIILFVFIFPQNLVFAGE. Residue Glu177 coordinates Ca(2+). Positions 235–265 are cleaved as a propeptide — spacer peptide; sequence SAVIKASEKVGKERENFVQSSEELGLPLKIG. Ser266 functions as the Nucleophile in the catalytic mechanism. Asp341 contacts Ca(2+).

Belongs to the peptidase S45 family. Heterodimer of an alpha subunit and a beta subunit processed from the same precursor. Ca(2+) serves as cofactor.

The protein localises to the secreted. It carries out the reaction a penicillin + H2O = 6-aminopenicillanate + a carboxylate. This chain is Penicillin G acylase (pac), found in Rhizobium viscosum (Arthrobacter viscosus).